The primary structure comprises 206 residues: High frequency lysogenization protein HflD homolog (206 aa).

This sequence belongs to the HflD family.

It localises to the cytoplasm. Its subcellular location is the cell inner membrane. In Pseudomonas paraeruginosa (strain DSM 24068 / PA7) (Pseudomonas aeruginosa (strain PA7)), this protein is High frequency lysogenization protein HflD homolog.